The following is a 250-amino-acid chain: Flavin-dependent thymidylate synthase (250 aa).

The region spanning 7 to 233 (LSVELIACSS…PTVFGDFEIE (227 aa)) is the ThyX domain. DUMP is bound by residues 92 to 95 (ELVR), 103 to 107 (QLSQR), and arginine 172. Residues 95 to 97 (RHR) and glutamine 103 each bind FAD. Residues 95–105 (RHRHFSFSQLS) carry the ThyX motif motif. Residues 188–190 (NFR) and histidine 194 each bind FAD. Arginine 199 is a binding site for dUMP. The active-site Involved in ionization of N3 of dUMP, leading to its activation is arginine 199.

This sequence belongs to the thymidylate synthase ThyX family. As to quaternary structure, homotetramer. FAD serves as cofactor.

The enzyme catalyses dUMP + (6R)-5,10-methylene-5,6,7,8-tetrahydrofolate + NADPH + H(+) = dTMP + (6S)-5,6,7,8-tetrahydrofolate + NADP(+). It functions in the pathway pyrimidine metabolism; dTTP biosynthesis. Functionally, catalyzes the reductive methylation of 2'-deoxyuridine-5'-monophosphate (dUMP) to 2'-deoxythymidine-5'-monophosphate (dTMP) while utilizing 5,10-methylenetetrahydrofolate (mTHF) as the methyl donor, and NADPH and FADH(2) as the reductant. The protein is Flavin-dependent thymidylate synthase of Corynebacterium glutamicum (strain ATCC 13032 / DSM 20300 / JCM 1318 / BCRC 11384 / CCUG 27702 / LMG 3730 / NBRC 12168 / NCIMB 10025 / NRRL B-2784 / 534).